The following is a 123-amino-acid chain: Potassium voltage-gated channel subfamily E member 2 (123 aa).

Residues asparagine 6 and asparagine 29 are each glycosylated (N-linked (GlcNAc...) asparagine). The helical transmembrane segment at 49-69 (VILYLMVMIGMFSFIIVAILV) threads the bilayer. At 70 to 123 (STVKSKRREHSNDPYHQYIVEDWQEKYKSQILNLEESKATIHENIGAAGFKMSP) the chain is on the cytoplasmic side.

It belongs to the potassium channel KCNE family. Interacts with KCNB1. Associates with KCNH2/ERG1. May associate with KCNQ2 and KCNQ3. Associates with HCN1 and probably HCN2. Heteromultimer with KCNC2. Interacts with KCNC2. Interacts with KCNQ1; forms a heterooligomer complex that targets to the membrane raft and leading to currents with an apparently instantaneous activation, a rapid deactivation process and a linear current-voltage relationship and decreases the amplitude of the outward current. In terms of tissue distribution, highly expressed in brain, heart, skeletal muscle, pancreas, placenta, kidney, colon and thymus. A small but significant expression is found in liver, ovary, testis, prostate, small intestine and leukocytes. Very low expression, nearly undetectable, in lung and spleen.

It is found in the cell membrane. It localises to the apical cell membrane. In terms of biological role, ancillary protein that functions as a regulatory subunit of the voltage-gated potassium (Kv) channel complex composed of pore-forming and potassium-conducting alpha subunits and of regulatory beta subunits. KCNE2 beta subunit modulates the gating kinetics and enhances stability of the channel complex. Alters the gating of the delayed rectifier Kv channel containing KCNB1 alpha subunit. Associates with KCNH2/HERG alpha subunit Kv channel to form the rapidly activating component of the delayed rectifying potassium current (IKr) in heart. May associate with KCNQ2 and/or KCNQ3 alpha subunits to modulate the native M-type current. May associate with HCN1 and HCN2 channel subunits to increase potassium current. Forms a heterooligomer complex with KCNQ1/KVLQT1 alpha subunits which leads to currents with an apparently instantaneous activation, a rapid deactivation process and a linear current-voltage relationship and decreases the amplitude of the outward current. KCNQ1-KCNE2 channel associates with Na(+)-coupled myo-inositol symporter in the apical membrane of choroid plexus epithelium and regulates the myo-inositol gradient between blood and cerebrospinal fluid with an impact on neuron excitability. This chain is Potassium voltage-gated channel subfamily E member 2, found in Homo sapiens (Human).